The primary structure comprises 420 residues: Anaerobic glycerol-3-phosphate dehydrogenase subunit B (420 aa).

Belongs to the anaerobic G-3-P dehydrogenase subunit B family. As to quaternary structure, composed of a catalytic GlpA/B dimer and of membrane bound GlpC. Requires FMN as cofactor.

It catalyses the reaction a quinone + sn-glycerol 3-phosphate = dihydroxyacetone phosphate + a quinol. It functions in the pathway polyol metabolism; glycerol degradation via glycerol kinase pathway; glycerone phosphate from sn-glycerol 3-phosphate (anaerobic route): step 1/1. In terms of biological role, conversion of glycerol 3-phosphate to dihydroxyacetone. Uses fumarate or nitrate as electron acceptor. This is Anaerobic glycerol-3-phosphate dehydrogenase subunit B from Pectobacterium atrosepticum (strain SCRI 1043 / ATCC BAA-672) (Erwinia carotovora subsp. atroseptica).